The primary structure comprises 354 residues: Guanine nucleotide-binding protein G(i) subunit alpha-1 (354 aa).

Gly2 carries N-myristoyl glycine lipidation. Cys3 is lipidated: S-palmitoyl cysteine. Positions 32-354 (REVKLLLLGA…KNNLKDCGLF (323 aa)) constitute a G-alpha domain. Residues 35-48 (KLLLLGAGESGKST) form a G1 motif region. GTP contacts are provided by residues 43 to 48 (ESGKST), 150 to 151 (DS), and 175 to 178 (LRTR). Ser47 contributes to the Mg(2+) binding site. The G2 motif stretch occupies residues 173 to 181 (DVLRTRVKT). Thr181 lines the Mg(2+) pocket. The tract at residues 196 to 205 (FKMFDVGGQR) is G3 motif. Residues 200–204 (DVGGQ), 269–272 (NKKD), and Ala326 each bind GTP. Residues 265–272 (ILFLNKKD) form a G4 motif region. Residues 324–329 (TCATDT) are G5 motif.

It belongs to the G-alpha family. G(i/o/t/z) subfamily. Heterotrimeric G proteins are composed of 3 units; alpha, beta and gamma. The alpha chain contains the guanine nucleotide binding site. Part of a spindle orientation complex. Identified in complex with the beta subunit GNB1 and the gamma subunit GNG1. Identified in complex with the beta subunit GNB1 and the gamma subunit GNG2. GTP binding causes dissociation of the heterotrimer, liberating the individual subunits so that they can interact with downstream effector proteins. In terms of processing, myristoylation at Gly-2 is required for membrane anchoring before palmitoylation. Post-translationally, palmitoylation at Cys-3 varies with membrane lipid composition.

It is found in the nucleus. It localises to the cytoplasm. The protein localises to the cell membrane. The protein resides in the cytoskeleton. Its subcellular location is the microtubule organizing center. It is found in the centrosome. It localises to the cell cortex. The protein localises to the membrane. It catalyses the reaction GTP + H2O = GDP + phosphate + H(+). In terms of biological role, guanine nucleotide-binding proteins (G proteins) function as transducers downstream of G protein-coupled receptors (GPCRs) in numerous signaling cascades. The alpha chain contains the guanine nucleotide binding site and alternates between an active, GTP-bound state and an inactive, GDP-bound state. Signaling by an activated GPCR promotes GDP release and GTP binding. The alpha subunit has a low GTPase activity that converts bound GTP to GDP, thereby terminating the signal. Both GDP release and GTP hydrolysis are modulated by numerous regulatory proteins. Signaling is mediated via effector proteins, such as adenylate cyclase. Inhibits adenylate cyclase activity of ADCY1, ADCY5 and ADCY6, leading to decreased intracellular cAMP levels. Required for cortical dynein-dynactin complex recruitment during metaphase. The chain is Guanine nucleotide-binding protein G(i) subunit alpha-1 (GNAI1) from Gallus gallus (Chicken).